Here is a 332-residue protein sequence, read N- to C-terminus: 2,3-diketo-L-gulonate reductase (332 aa).

The active-site Proton donor is His-44. NAD(+) is bound by residues 168–174, 224–225, and 304–306; these read ITMVDMS, WK, and GHE.

This sequence belongs to the LDH2/MDH2 oxidoreductase family. DlgD subfamily. In terms of assembly, homodimer.

The protein localises to the cytoplasm. The catalysed reaction is 3-dehydro-L-gulonate + NAD(+) = 2,3-dioxo-L-gulonate + NADH + H(+). It carries out the reaction 3-dehydro-L-gulonate + NADP(+) = 2,3-dioxo-L-gulonate + NADPH + H(+). In terms of biological role, catalyzes the reduction of 2,3-diketo-L-gulonate in the presence of NADH, to form 3-keto-L-gulonate. This is 2,3-diketo-L-gulonate reductase from Salmonella paratyphi C (strain RKS4594).